The following is a 556-amino-acid chain: (6-4)DNA photolyase (556 aa).

A Photolyase/cryptochrome alpha/beta domain is found at 24 to 162; that stretch reads SGSLIWFRKG…EVFSPVSHTL (139 aa). Phosphate is bound at residue glutamate 262. FAD contacts are provided by residues lysine 263, 276 to 280, 317 to 321, 380 to 383, arginine 386, 415 to 417, and asparagine 421; these read TTVMS, QLLWR, WMHH, and DSD. Tryptophan 320 is a DNA binding site. Positions 382–387 are interaction with DNA; it reads HHLARH. Residue tryptophan 427 participates in DNA binding. Residues 534–556 are disordered; the sequence is LRRKLQKDEHEESKIRNQRPKLK. The segment covering 539-548 has biased composition (basic and acidic residues); sequence QKDEHEESKI.

It belongs to the DNA photolyase class-1 family. FAD serves as cofactor. Expressed in siliques, flowers and leaves. Not detected in roots.

It carries out the reaction (6-4) photoproduct (in DNA) = 2 pyrimidine residues (in DNA).. Involved in repair of UV radiation-induced DNA damage. Catalyzes the photoreactivation of pyrimidine [6-4] pyrimidone photoproduct (6-4 products). Binds specifically to DNA containing 6-4 products and repairs these lesions in a visible light-dependent manner. Not required for repair of cyclobutane pyrimidine dimer (CPD). The protein is (6-4)DNA photolyase (UVR3) of Arabidopsis thaliana (Mouse-ear cress).